The following is a 548-amino-acid chain: Chaperonin GroEL (548 aa).

Residues 30 to 33, Lys-51, 87 to 91, Gly-415, 479 to 481, and Asp-495 contribute to the ATP site; these read TLGP, DGTTT, and NAA.

The protein belongs to the chaperonin (HSP60) family. As to quaternary structure, forms a cylinder of 14 subunits composed of two heptameric rings stacked back-to-back. Interacts with the co-chaperonin GroES.

Its subcellular location is the cytoplasm. The enzyme catalyses ATP + H2O + a folded polypeptide = ADP + phosphate + an unfolded polypeptide.. Its function is as follows. Together with its co-chaperonin GroES, plays an essential role in assisting protein folding. The GroEL-GroES system forms a nano-cage that allows encapsulation of the non-native substrate proteins and provides a physical environment optimized to promote and accelerate protein folding. The polypeptide is Chaperonin GroEL (Ectopseudomonas mendocina (strain ymp) (Pseudomonas mendocina)).